Reading from the N-terminus, the 181-residue chain is UPF0340 protein OB2986 (181 aa).

The protein belongs to the UPF0340 family.

The protein is UPF0340 protein OB2986 of Oceanobacillus iheyensis (strain DSM 14371 / CIP 107618 / JCM 11309 / KCTC 3954 / HTE831).